A 612-amino-acid chain; its full sequence is Pentatricopeptide repeat-containing protein At4g14050, mitochondrial (612 aa).

Residues 1–24 (MLIPHYLHQLQLCARNRTLTTAKA) constitute a mitochondrion transit peptide. PPR repeat units lie at residues 37-71 (CCPL…DHIA), 72-103 (WASV…GLRP), 104-138 (DDFV…EYAN), 139-169 (DEVV…IRVK), 170-204 (NTIS…NLYS), 205-235 (WTAL…RVDI), 237-271 (DPLV…GFDS), 272-302 (CVFI…MRHR), 303-337 (DVVS…GVKP), 338-373 (NEVT…GIRP), and 374-408 (SLQH…PDEP). The tract at residues 409–485 (TWAALLSACK…DPGHSSVEVR (77 aa)) is type E motif. Positions 486–516 (KETEVFYAGETSHPLKEDIFRLLKKLEEEMR) are type E(+) motif. A type DYW motif region spans residues 518–612 (RNGYVPDTSW…GGKCSCNDFW (95 aa)).

It belongs to the PPR family. PCMP-H subfamily. Interacts with MORF8/RIP1 and MORF1/RIP8.

The protein localises to the mitochondrion. In terms of biological role, involved in C-to-U editing of mitochondrial RNA. Required specifically for editing the mitochondrial NAD4, MT-CYB/COB and RPL16 transcripts. The protein is Pentatricopeptide repeat-containing protein At4g14050, mitochondrial (PCMP-H13) of Arabidopsis thaliana (Mouse-ear cress).